The primary structure comprises 147 residues: Lysozyme C-1 (147 aa).

An N-terminal signal peptide occupies residues 1 to 18; the sequence is MKALLTLVFCLLPLAAQG. Residues 19 to 147 form the C-type lysozyme domain; the sequence is KVYSRCELAA…VSKWIRGCRL (129 aa). Cystine bridges form between cysteine 24–cysteine 145, cysteine 48–cysteine 133, cysteine 82–cysteine 98, and cysteine 94–cysteine 112. Active-site residues include glutamate 53 and aspartate 70.

This sequence belongs to the glycosyl hydrolase 22 family.

It localises to the secreted. It carries out the reaction Hydrolysis of (1-&gt;4)-beta-linkages between N-acetylmuramic acid and N-acetyl-D-glucosamine residues in a peptidoglycan and between N-acetyl-D-glucosamine residues in chitodextrins.. Its function is as follows. Lysozymes have primarily a bacteriolytic function; those in tissues and body fluids are associated with the monocyte-macrophage system and enhance the activity of immunoagents. The chain is Lysozyme C-1 from Anas platyrhynchos (Mallard).